The chain runs to 333 residues: Protoheme IX farnesyltransferase (333 aa).

The next 7 membrane-spanning stretches (helical) occupy residues 63 to 83, 109 to 129, 132 to 152, 160 to 180, 188 to 208, 245 to 265, and 292 to 312; these read LACTLGGGALAAAAAGVLNCI, AAFIGAISCTLAAAALLVSGV, LAAGLSLLGLCSYVLLYTAIL, IVIGGVAGAIPPLVGAAAASG, WLFALVMLWTPAHFWALALLL, GFGVWALPEGGLLYGLLLIPF, and WSIFYMFGICLLLVVSRLPMA.

This sequence belongs to the UbiA prenyltransferase family. Protoheme IX farnesyltransferase subfamily.

The protein localises to the cell inner membrane. The enzyme catalyses heme b + (2E,6E)-farnesyl diphosphate + H2O = Fe(II)-heme o + diphosphate. It functions in the pathway porphyrin-containing compound metabolism; heme O biosynthesis; heme O from protoheme: step 1/1. Its function is as follows. Converts heme B (protoheme IX) to heme O by substitution of the vinyl group on carbon 2 of heme B porphyrin ring with a hydroxyethyl farnesyl side group. The sequence is that of Protoheme IX farnesyltransferase from Prochlorococcus marinus (strain MIT 9303).